The primary structure comprises 588 residues: Phosphoinositide phosphatase SAC8 (588 aa).

The disordered stretch occupies residues 37-56; sequence FSVNRRDGNIKPLDENASSG. Over residues 40-50 the composition is skewed to basic and acidic residues; it reads NRRDGNIKPLD. The 327-residue stretch at 129 to 455 folds into the SAC domain; that stretch reads LQALETTPGL…GDEVSLQYAG (327 aa). The short motif at 390–401 is the Phosphatase catalytic core element; the sequence is RSNCIDCLDRTN. The next 2 membrane-spanning stretches (helical) occupy residues 524 to 544 and 555 to 575; these read SFLPVASALLIGGVTVTSFTI and LASALWAGVTAGVVAMIKANG.

As to expression, ubiquitous with a higher level of expression in young seedlings than in other tissues.

Its subcellular location is the endoplasmic reticulum membrane. Phosphoinositide phosphatase that hydrolyzes PtdIns(3)P and PtdIns(4)P. This Arabidopsis thaliana (Mouse-ear cress) protein is Phosphoinositide phosphatase SAC8 (SAC8).